The chain runs to 318 residues: Thioredoxin reductase (318 aa).

36–43 lines the FAD pocket; the sequence is TGMQQGGQ. Cys-136 and Cys-139 form a disulfide bridge. 286–295 serves as a coordination point for FAD; sequence DVMDHNYRQA.

Belongs to the class-II pyridine nucleotide-disulfide oxidoreductase family. In terms of assembly, homodimer. The cofactor is FAD.

The protein localises to the cytoplasm. It catalyses the reaction [thioredoxin]-dithiol + NADP(+) = [thioredoxin]-disulfide + NADPH + H(+). The sequence is that of Thioredoxin reductase (trxB) from Vibrio cholerae serotype O1 (strain ATCC 39315 / El Tor Inaba N16961).